We begin with the raw amino-acid sequence, 354 residues long: Uroporphyrinogen decarboxylase (354 aa).

Substrate contacts are provided by residues 27–31 (RQAGR), Asp77, Tyr154, Ser209, and His327.

Belongs to the uroporphyrinogen decarboxylase family. Homodimer.

It is found in the cytoplasm. The catalysed reaction is uroporphyrinogen III + 4 H(+) = coproporphyrinogen III + 4 CO2. Its pathway is porphyrin-containing compound metabolism; protoporphyrin-IX biosynthesis; coproporphyrinogen-III from 5-aminolevulinate: step 4/4. Functionally, catalyzes the decarboxylation of four acetate groups of uroporphyrinogen-III to yield coproporphyrinogen-III. This Pseudoalteromonas translucida (strain TAC 125) protein is Uroporphyrinogen decarboxylase.